The following is a 376-amino-acid chain: Alpha-ketoglutarate-dependent dioxygenase esdpJ (376 aa).

Positions 145 and 147 each coordinate Fe cation. T202 is a binding site for 2-oxoglutarate. Positions 234 to 260 (YNQSSQEKKSEIHVEPRGSPNNVGSDL) are disordered. The segment covering 239–249 (QEKKSEIHVEP) has biased composition (basic and acidic residues). H335 contacts Fe cation. Residues R347 and R351 each contribute to the 2-oxoglutarate site. The disordered stretch occupies residues 354–376 (GVGEQPYLDPESKTRREALGEFN). Positions 363-376 (PESKTRREALGEFN) are enriched in basic and acidic residues.

This sequence belongs to the TfdA dioxygenase family. It depends on Fe(2+) as a cofactor.

Alpha-ketoglutarate-dependent dioxygenas; part of the cluster that mediates the biosynthesis of shearones, diterpenoid pyrones (DPs) which are structurally diverse meroterpenoids consisting of a diterpene linked by a pyrone, and which may exhibit a range of bioactivities. The alpha-ketoglutarate-dependent dioxygenase esdpJ seems not to be involved in this pathway. The molecular scaffold is commonly biosynthesized by a series of enzymes including the non-reducing polyketide synthase (NR-PKS) esdpA that generates an alpha-pyrone; the prenyltransferase esdpC that attaches a geranylgeranyl pyrophosphate (GGPP) produced by the GGPP synthase (GGPPS) esdpD onto the pyrone unit; the FAD-dependent monooxygenase esdpE that converts an olefin on the diterpene unit into an epoxide; and the terpene cyclase esdpB that catalyzes the cyclization reactions to give the molecular backbone shearone A. In the modification steps, esdpF oxidizes the hydroxy group to a ketone at C-3 and esdpG then attaches hydroxy groups at both C-11 and C-12. After that, esdpI hydroxylates at C-20 and esdpH hydroxylates at C-6'. The ether bridge is generated by nucleophilic attack of the hydroxy group at C-20 to the carbonyl carbon at C-3. EsdpH can also functions prior to esdpI. The different combinations of these modification enzymes lead to the production of diverse shearone derivatives, shearone I being the end product of the pathway. The sequence is that of Alpha-ketoglutarate-dependent dioxygenase esdpJ from Penicillium shearii (Eupenicillium shearii).